We begin with the raw amino-acid sequence, 454 residues long: Tryptophanase (454 aa).

K256 carries the post-translational modification N6-(pyridoxal phosphate)lysine.

Belongs to the beta-eliminating lyase family. In terms of assembly, homotetramer. Requires pyridoxal 5'-phosphate as cofactor.

The catalysed reaction is L-tryptophan + H2O = indole + pyruvate + NH4(+). It functions in the pathway amino-acid degradation; L-tryptophan degradation via pyruvate pathway; indole and pyruvate from L-tryptophan: step 1/1. This is Tryptophanase (tnaA) from Rhodobacter capsulatus (Rhodopseudomonas capsulata).